The chain runs to 350 residues: Ion-translocating oxidoreductase complex subunit D (350 aa).

4 consecutive transmembrane segments (helical) span residues 36–56 (FYFF…IALL), 68–88 (PIIS…IGVS), 89–109 (IPSI…IVIV), and 120–140 (IFNP…VQMT). Position 185 is an FMN phosphoryl threonine (Thr185). Transmembrane regions (helical) follow at residues 212-232 (GFGV…LAML), 239-259 (WQIS…GYLL), 265-285 (IGPL…FIAT), 291-311 (ATSV…VYVI), and 315-335 (GGYP…APFI).

This sequence belongs to the NqrB/RnfD family. As to quaternary structure, the complex is composed of six subunits: RnfA, RnfB, RnfC, RnfD, RnfE and RnfG. FMN is required as a cofactor.

The protein localises to the cell inner membrane. Part of a membrane-bound complex that couples electron transfer with translocation of ions across the membrane. The polypeptide is Ion-translocating oxidoreductase complex subunit D (Shewanella piezotolerans (strain WP3 / JCM 13877)).